A 336-amino-acid chain; its full sequence is N6-methyladenosine RNA methyltransferase MTA1 (336 aa).

Positions 61–83 (LISSEPPHLPFKTPEPKAGSGGL) are disordered.

Belongs to the MT-A70-like family.

It carries out the reaction an adenosine in mRNA + S-adenosyl-L-methionine = an N(6)-methyladenosine in mRNA + S-adenosyl-L-homocysteine + H(+). In terms of biological role, N6-methyladenosine RNA methyltransferase that plays a crucial role in fungal phenotypic traits, virulence, and stress tolerance. Mediates the methylation of mRNAs to produce N6-methyladenosine (m6A)-containing mRNAs. M6A is a modification present at internal sites of mRNAs and some non-coding RNAs and plays a role in mRNA stability and processing. Mediates specifically acid phosphatase APHA mRNA stability through a YTHDF1-dependent m6A modification of the A1306, A1341, and A1666 key methylation modification sites. Also mediates the stability of the transcription factor ZAP1 mRNA via modification of residue A1935 localized in the 3'UTR. The chain is N6-methyladenosine RNA methyltransferase MTA1 from Cryphonectria parasitica (strain ATCC 38755 / EP155).